A 446-amino-acid chain; its full sequence is Phosphoglucosamine mutase (446 aa).

The active-site Phosphoserine intermediate is S103. Residues S103, D242, D244, and D246 each coordinate Mg(2+). At S103 the chain carries Phosphoserine.

Belongs to the phosphohexose mutase family. Requires Mg(2+) as cofactor. In terms of processing, activated by phosphorylation.

The enzyme catalyses alpha-D-glucosamine 1-phosphate = D-glucosamine 6-phosphate. Its function is as follows. Catalyzes the conversion of glucosamine-6-phosphate to glucosamine-1-phosphate. The chain is Phosphoglucosamine mutase from Vibrio atlanticus (strain LGP32) (Vibrio splendidus (strain Mel32)).